A 332-amino-acid polypeptide reads, in one-letter code: ATP-dependent 6-phosphofructokinase (332 aa).

Glycine 11 contributes to the ATP binding site. 21–25 (RSVVR) contacts ADP. ATP-binding positions include 72 to 73 (RC) and 102 to 105 (GDGS). Aspartate 103 serves as a coordination point for Mg(2+). 126–128 (TID) is a substrate binding site. Aspartate 128 acts as the Proton acceptor in catalysis. An ADP-binding site is contributed by arginine 155. Substrate contacts are provided by residues arginine 163 and 170-172 (MGR). ADP-binding positions include 186-188 (GAE), arginine 212, and 214-216 (KLH). Substrate-binding positions include glutamate 223, arginine 256, and 262 to 265 (HIQR).

This sequence belongs to the phosphofructokinase type A (PFKA) family. ATP-dependent PFK group I subfamily. Prokaryotic clade 'B1' sub-subfamily. Homotetramer. Mg(2+) is required as a cofactor.

It is found in the cytoplasm. It carries out the reaction beta-D-fructose 6-phosphate + ATP = beta-D-fructose 1,6-bisphosphate + ADP + H(+). It functions in the pathway carbohydrate degradation; glycolysis; D-glyceraldehyde 3-phosphate and glycerone phosphate from D-glucose: step 3/4. Its activity is regulated as follows. Allosterically activated by ADP and other diphosphonucleosides, and allosterically inhibited by phosphoenolpyruvate. Functionally, catalyzes the phosphorylation of D-fructose 6-phosphate to fructose 1,6-bisphosphate by ATP, the first committing step of glycolysis. The chain is ATP-dependent 6-phosphofructokinase from Halothermothrix orenii (strain H 168 / OCM 544 / DSM 9562).